We begin with the raw amino-acid sequence, 250 residues long: MSDLLCSAKLGAMTLALLLSATSLSALASVTPDRTRLIFNESDKSISVTLRNNDPKLPYLAQSWIEDEKGNKITSPLTVLPPVQRIDSMMNGQVKVQGMPDINKLPADRESMFYFNVREIPPKSNKPNTLQIALQTRIKLFWRPKALEKVSMKSPWQHKVTLTRSGQAFTVNNPTPYYVIISNASAQKNGNPAAGFSPLVIEPKTTVPLNVKMDSVPVLTYVNDFGARMPLFFQCNGNSCQVDEEQSRKG.

The signal sequence occupies residues 1-28 (MSDLLCSAKLGAMTLALLLSATSLSALA).

Belongs to the periplasmic pilus chaperone family.

It is found in the periplasm. Functionally, part of the yfcOPQRSUV fimbrial operon. Could contribute to adhesion to various surfaces in specific environmental niches. Increases adhesion to eukaryotic T24 bladder epithelial cells in the absence of fim genes. This chain is Probable fimbrial chaperone YfcS (yfcS), found in Escherichia coli (strain K12).